A 240-amino-acid chain; its full sequence is Uridylate kinase (240 aa).

13–16 (KASG) is an ATP binding site. The segment at 21 to 26 (GSQGFG) is involved in allosteric activation by GTP. Gly55 is a UMP binding site. ATP is bound by residues Gly56 and Arg60. Residues Asp75 and 136–143 (TGNPFFTT) contribute to the UMP site. Thr163, Gln164, Tyr169, and Asp172 together coordinate ATP.

It belongs to the UMP kinase family. Homohexamer.

The protein localises to the cytoplasm. It catalyses the reaction UMP + ATP = UDP + ADP. The protein operates within pyrimidine metabolism; CTP biosynthesis via de novo pathway; UDP from UMP (UMPK route): step 1/1. With respect to regulation, allosterically activated by GTP. Inhibited by UTP. Functionally, catalyzes the reversible phosphorylation of UMP to UDP. The protein is Uridylate kinase of Sinorhizobium medicae (strain WSM419) (Ensifer medicae).